The chain runs to 214 residues: ATP phosphoribosyltransferase (214 aa).

Belongs to the ATP phosphoribosyltransferase family. Short subfamily. In terms of assembly, heteromultimer composed of HisG and HisZ subunits.

The protein resides in the cytoplasm. It carries out the reaction 1-(5-phospho-beta-D-ribosyl)-ATP + diphosphate = 5-phospho-alpha-D-ribose 1-diphosphate + ATP. The protein operates within amino-acid biosynthesis; L-histidine biosynthesis; L-histidine from 5-phospho-alpha-D-ribose 1-diphosphate: step 1/9. In terms of biological role, catalyzes the condensation of ATP and 5-phosphoribose 1-diphosphate to form N'-(5'-phosphoribosyl)-ATP (PR-ATP). Has a crucial role in the pathway because the rate of histidine biosynthesis seems to be controlled primarily by regulation of HisG enzymatic activity. The polypeptide is ATP phosphoribosyltransferase (Halorhodospira halophila (strain DSM 244 / SL1) (Ectothiorhodospira halophila (strain DSM 244 / SL1))).